Reading from the N-terminus, the 431-residue chain is Gamma conglutin 1 (431 aa).

The N-terminal stretch at 1–24 (MASFLHNFLLFFCSLSLIILTSSA) is a signal peptide. The Peptidase A1 domain occupies 51–407 (HVVQIHKRTP…DLMNSRLGFS (357 aa)). 5 disulfides stabilise this stretch: cysteine 79-cysteine 168, cysteine 93-cysteine 106, cysteine 98-cysteine 123, cysteine 109-cysteine 118, and cysteine 322-cysteine 369.

The protein belongs to the peptidase A1 family. Two-subunit monomeric unit made of alpha and beta subunits coupled by disulfide bonds (at pH 4.5 and under non-reducing conditions). Monomeric alpha and beta subunits in reducing conditions. Can also form oligomers including dimer, tetramer and cyclic hexamer (trimer of dimers) (at pH &gt; 5.5). Component of globulins complexes which accumulate in seeds. Interacts with flavonoids (e.g. apigenin glucosides) present in globulins complexes.

The protein resides in the secreted. It localises to the extracellular space. Its function is as follows. Sulfur-rich seed storage protein that remains undegraded at germination. The chain is Gamma conglutin 1 from Prunus dulcis (Almond).